The primary structure comprises 332 residues: Ketol-acid reductoisomerase (NADP(+)) (332 aa).

The 182-residue stretch at 1–182 (MAVIYYDKDC…GSNRAGILET (182 aa)) folds into the KARI N-terminal Rossmann domain. Residues 25-28 (YGAQ) and 83-86 (DTSQ) each bind NADP(+). Residue His108 is part of the active site. Gly134 provides a ligand contact to NADP(+). In terms of domain architecture, KARI C-terminal knotted spans 183–328 (TFAEETETDL…AELRSMMSWL (146 aa)). Residues Asp191, Glu195, Glu227, and Glu231 each contribute to the Mg(2+) site. Residue Ser252 participates in substrate binding.

The protein belongs to the ketol-acid reductoisomerase family. The cofactor is Mg(2+).

The enzyme catalyses (2R)-2,3-dihydroxy-3-methylbutanoate + NADP(+) = (2S)-2-acetolactate + NADPH + H(+). It catalyses the reaction (2R,3R)-2,3-dihydroxy-3-methylpentanoate + NADP(+) = (S)-2-ethyl-2-hydroxy-3-oxobutanoate + NADPH + H(+). It functions in the pathway amino-acid biosynthesis; L-isoleucine biosynthesis; L-isoleucine from 2-oxobutanoate: step 2/4. The protein operates within amino-acid biosynthesis; L-valine biosynthesis; L-valine from pyruvate: step 2/4. Functionally, involved in the biosynthesis of branched-chain amino acids (BCAA). Catalyzes an alkyl-migration followed by a ketol-acid reduction of (S)-2-acetolactate (S2AL) to yield (R)-2,3-dihydroxy-isovalerate. In the isomerase reaction, S2AL is rearranged via a Mg-dependent methyl migration to produce 3-hydroxy-3-methyl-2-ketobutyrate (HMKB). In the reductase reaction, this 2-ketoacid undergoes a metal-dependent reduction by NADPH to yield (R)-2,3-dihydroxy-isovalerate. This Dehalococcoides mccartyi (strain CBDB1) protein is Ketol-acid reductoisomerase (NADP(+)).